We begin with the raw amino-acid sequence, 226 residues long: V-type proton ATPase subunit E (226 aa).

This sequence belongs to the V-ATPase E subunit family. V-ATPase is a heteromultimeric enzyme composed of a peripheral catalytic V1 complex (components A to H) attached to an integral membrane V0 proton pore complex (components: a, c, c', c'', d, e, f and VOA1).

It is found in the vacuole membrane. Subunit of the V1 complex of vacuolar(H+)-ATPase (V-ATPase), a multisubunit enzyme composed of a peripheral complex (V1) that hydrolyzes ATP and a membrane integral complex (V0) that translocates protons. V-ATPase is responsible for acidifying and maintaining the pH of intracellular compartments. The chain is V-type proton ATPase subunit E (VMA4) from Candida albicans (Yeast).